We begin with the raw amino-acid sequence, 169 residues long: Peptide deformylase (169 aa).

Residues cysteine 91 and histidine 133 each coordinate Fe cation. The active site involves glutamate 134. Histidine 137 provides a ligand contact to Fe cation.

The protein belongs to the polypeptide deformylase family. It depends on Fe(2+) as a cofactor.

The catalysed reaction is N-terminal N-formyl-L-methionyl-[peptide] + H2O = N-terminal L-methionyl-[peptide] + formate. Functionally, removes the formyl group from the N-terminal Met of newly synthesized proteins. Requires at least a dipeptide for an efficient rate of reaction. N-terminal L-methionine is a prerequisite for activity but the enzyme has broad specificity at other positions. In Enterobacter sp. (strain 638), this protein is Peptide deformylase.